The following is a 318-amino-acid chain: L-carnitine dehydrogenase (318 aa).

14–19 (GAGVIG) lines the NAD(+) pocket.

This sequence belongs to the 3-hydroxyacyl-CoA dehydrogenase family. L-carnitine dehydrogenase subfamily. In terms of assembly, homodimer.

The protein localises to the cytoplasm. It carries out the reaction carnitine + NAD(+) = 3-dehydrocarnitine + NADH + H(+). The protein operates within amine and polyamine metabolism; carnitine metabolism. Functionally, catalyzes the NAD(+)-dependent oxidation of L-carnitine to 3-dehydrocarnitine. In Streptomyces coelicolor (strain ATCC BAA-471 / A3(2) / M145), this protein is L-carnitine dehydrogenase.